A 262-amino-acid polypeptide reads, in one-letter code: Co-chaperone protein DjlA (262 aa).

Residues 1 to 6 (MRFWGK) lie on the Periplasmic side of the membrane. Residues 7 to 30 (FFGFVIGFMFGRFFGALLGLWLGH) form a helical membrane-spanning segment. The Cytoplasmic portion of the chain corresponds to 31 to 262 (LYDKRPGGGA…DRVKSERGMR (232 aa)). The 67-residue stretch at 196-262 (DAYHLLGITA…DRVKSERGMR (67 aa)) folds into the J domain.

Homodimer.

It is found in the cell inner membrane. Functionally, regulatory DnaK co-chaperone. Direct interaction between DnaK and DjlA is needed for the induction of the wcaABCDE operon, involved in the synthesis of a colanic acid polysaccharide capsule, possibly through activation of the RcsB/RcsC phosphotransfer signaling pathway. The colanic acid capsule may help the bacterium survive conditions outside the host. This is Co-chaperone protein DjlA from Shewanella oneidensis (strain ATCC 700550 / JCM 31522 / CIP 106686 / LMG 19005 / NCIMB 14063 / MR-1).